Here is a 525-residue protein sequence, read N- to C-terminus: MTQIAHPDSILIIDFGSQVTQLIARRIREAGVYCEIHPFQNAAEAFEKLQPKGVIFSGGPASVTAEGSPRAPQAVFDSKVPILGICYGQQTLCTQLGGVVEGGHAAEFGRADIDIKKASPLFEGFWEQGKSYPVWMSHGDRVTKLPEGFEVIATSENAPFAIAADEKRHYYTTMFHPEVVHTPDGGKLLSNFVHKIVGLKSDWTMAAYRAEMIRKIREQVGTGRVLCALSGGVDSSVAAILIHEAIGDQLTCVYVDHGLMRLGESEQVVGMFRDHYNIPLVHVDAADLFLGELSGVSDPEVKRKTIGRLFIEVFEAEAAKIAADGKGAPKFLAQGTLYPDVIESVSFSGGPSVTIKSHHNVGGLPERMNMQLVEPLRELFKDEVRALGRELGLPESFIGRHPFPGPGLAIRCPGAITREKLDILRKADAIYLDEIRKAGLYDTIWQAFAVLLPVQTVGVMGDYRTYDFVCALRAVTSVDGMTADFYPYDMNFLGRAATRIINEVRGINRVVYDVTSKPPGTIEWE.

Positions 9–202 (SILIIDFGSQ…VHKIVGLKSD (194 aa)) constitute a Glutamine amidotransferase type-1 domain. The Nucleophile role is filled by C86. Active-site residues include H176 and E178. The GMPS ATP-PPase domain occupies 203–400 (WTMAAYRAEM…LGLPESFIGR (198 aa)). 230–236 (SGGVDSS) lines the ATP pocket.

Homodimer.

It catalyses the reaction XMP + L-glutamine + ATP + H2O = GMP + L-glutamate + AMP + diphosphate + 2 H(+). Its pathway is purine metabolism; GMP biosynthesis; GMP from XMP (L-Gln route): step 1/1. Its function is as follows. Catalyzes the synthesis of GMP from XMP. The chain is GMP synthase [glutamine-hydrolyzing] from Agrobacterium fabrum (strain C58 / ATCC 33970) (Agrobacterium tumefaciens (strain C58)).